The chain runs to 368 residues: Proteinase-activated receptor 3 (368 aa).

The N-terminal stretch at 1 to 21 (MEMKVLILVGVRLLFLPTTVC) is a signal peptide. The propeptide at 22–37 (QSGMKHVSDNSALTAE) is removed for receptor activation. The Extracellular portion of the chain corresponds to 38-93 (SFNGNEHSFEEFPLSDIEGWTGATTTIKAKCPEESITTLHVNNATMGYLRSSLSTK). A glycan (N-linked (GlcNAc...) asparagine) is linked at N80. A helical transmembrane segment spans residues 94–114 (VIPAIYILVFVIGVPANIVTL). Residues 115 to 123 (WKLSSRTKS) are Cytoplasmic-facing. Residues 124-144 (ICLVIFHTNLAIADLLFCVTL) form a helical membrane-spanning segment. Residues 145-166 (PFKIAYHLNGNDWVFGEVMCRV) lie on the Extracellular side of the membrane. C164 and C243 are disulfide-bonded. The helical transmembrane segment at 167 to 187 (TTVAFYGNMYCAILILTCMGI) threads the bilayer. The Cytoplasmic segment spans residues 188–208 (NRYLATVHPFTYRKLPKRNFT). Residues 209–229 (LLMCGVVWVMVVLYMLPLAIL) form a helical membrane-spanning segment. The Extracellular segment spans residues 230-257 (KQEYHLVQPGITTCHDVHDTCESPLPFQ). Residues 258–278 (FYYFVSLAFFGFLIPFVVSVF) traverse the membrane as a helical segment. Residues 279-300 (CYTTLIHKLNAQDRKWLRYIKA) lie on the Cytoplasmic side of the membrane. Residues 301-321 (VLLILVIFTICFAPTNIILII) traverse the membrane as a helical segment. Residues 322-338 (HHANYYYSNTDSLYFMY) lie on the Extracellular side of the membrane. A helical membrane pass occupies residues 339–359 (LIALCLGSLNSCLDPFLYFIM). Residues 360-368 (SKIVDQLTS) lie on the Cytoplasmic side of the membrane.

It belongs to the G-protein coupled receptor 1 family. In terms of assembly, interacts with INSC/inscuteable and GPSM2. In terms of processing, a proteolytic cleavage generates a new N-terminus that functions as a tethered ligand.

It is found in the cell membrane. In terms of biological role, receptor for activated thrombin coupled to G proteins that stimulate phosphoinositide hydrolysis. In Rattus norvegicus (Rat), this protein is Proteinase-activated receptor 3 (F2rl2).